We begin with the raw amino-acid sequence, 261 residues long: Small ribosomal subunit protein uS2 (261 aa).

An N-acetylserine modification is found at serine 2. The disordered stretch occupies residues glutamine 212–tryptophan 261. Acidic residues predominate over residues glutamate 222–tryptophan 244.

It belongs to the universal ribosomal protein uS2 family. As to quaternary structure, component of the small ribosomal subunit. Mature ribosomes consist of a small (40S) and a large (60S) subunit. The 40S subunit contains about 33 different proteins and 1 molecule of RNA (18S). The 60S subunit contains about 49 different proteins and 3 molecules of RNA (25S, 5.8S and 5S). Interacts with RPS21.

Its subcellular location is the cytoplasm. Its function is as follows. Required for the assembly and/or stability of the 40S ribosomal subunit. Required for the processing of the 20S rRNA-precursor to mature 18S rRNA in a late step of the maturation of 40S ribosomal subunits. The chain is Small ribosomal subunit protein uS2 from Candida tropicalis (Yeast).